The following is a 50-amino-acid chain: Toxic protein HokE (50 aa).

A helical membrane pass occupies residues 5–25; that stretch reads YALAAVIVLCLTVLGFTLLVG.

This sequence belongs to the Hok/Gef family.

The protein localises to the cell inner membrane. Functionally, toxic component of a type I toxin-antitoxin (TA) system; if it expressed it could be neutralized by antisense antitoxin RNA SokE. This Escherichia coli (strain K12) protein is Toxic protein HokE.